A 131-amino-acid chain; its full sequence is Large ribosomal subunit protein bL19 (131 aa).

It belongs to the bacterial ribosomal protein bL19 family.

Its function is as follows. This protein is located at the 30S-50S ribosomal subunit interface and may play a role in the structure and function of the aminoacyl-tRNA binding site. In Afipia carboxidovorans (strain ATCC 49405 / DSM 1227 / KCTC 32145 / OM5) (Oligotropha carboxidovorans), this protein is Large ribosomal subunit protein bL19.